Consider the following 137-residue polypeptide: UBAP1-MVB12-associated (UMA)-domain containing protein 1 (137 aa).

The disordered stretch occupies residues 1–72 (MFHFFRKPPE…VSDPEMENKA (72 aa)). Over residues 32–44 (DEQRMTARGKTSD) the composition is skewed to basic and acidic residues. Positions 50-63 (PLETNKENSSSVTV) are enriched in polar residues. One can recognise a UMA domain in the interval 86-134 (LSDVPFTLAPHVLAVQGTITDLPDHLLSYDGSENLSRFWYDFTLENSVL).

The polypeptide is UBAP1-MVB12-associated (UMA)-domain containing protein 1 (Homo sapiens (Human)).